The chain runs to 193 residues: Immunogenic protein MPB70 (193 aa).

Positions 1–30 are cleaved as a signal peptide; the sequence is MKVKNTIAATSFAAAGLAALAVAVSPPAAA. The 133-residue stretch at 57 to 189 folds into the FAS1 domain; that stretch reads QDPVAVAASN…ATVYMIDSVL (133 aa).

As to quaternary structure, generally found as a monomer; homodimer in culture fluids.

It is found in the secreted. This chain is Immunogenic protein MPB70 (mpb70), found in Mycobacterium bovis (strain ATCC BAA-935 / AF2122/97).